We begin with the raw amino-acid sequence, 149 residues long: Large ribosomal subunit protein uL15 (149 aa).

A disordered region spans residues 14–57 (KQRKRVGRGSGSGWGCTSGKGNKGQNARSGGGVRPGFEGGQMPL). Composition is skewed to gly residues over residues 21–35 (RGSGSGWGCTSGKGN) and 42–52 (SGGGVRPGFEG).

Belongs to the universal ribosomal protein uL15 family. As to quaternary structure, part of the 50S ribosomal subunit.

In terms of biological role, binds to the 23S rRNA. The chain is Large ribosomal subunit protein uL15 from Oleidesulfovibrio alaskensis (strain ATCC BAA-1058 / DSM 17464 / G20) (Desulfovibrio alaskensis).